The primary structure comprises 323 residues: Viral cathepsin (323 aa).

A signal peptide spans 1-16 (MNKILFYLFVYGVVNS). Residues 17 to 112 (AAYDLLKAPN…IVLDQPPGKG (96 aa)) constitute a propeptide, activation peptide. Intrachain disulfides connect C133-C174, C167-C207, and C262-C310. The active site involves C136. The N-linked (GlcNAc...) asparagine; by host glycan is linked to N158. Active-site residues include H269 and N289.

The protein belongs to the peptidase C1 family. As to quaternary structure, interacts with chitinase/CHIA; this interaction maintains VCATH in the host endoplasmic reticulum. In terms of processing, synthesized as an inactive proenzyme and activated by proteolytic removal of the inhibitory propeptide.

It localises to the host endoplasmic reticulum. The enzyme catalyses Endopeptidase of broad specificity, hydrolyzing substrates of both cathepsin L and cathepsin B.. In terms of biological role, cysteine protease that plays an essential role in host liquefaction to facilitate horizontal transmission of the virus. Accumulates within infected cells as an inactive proenzyme (proV-CATH), which is activated by proteolytic cleavage upon cell death. The chain is Viral cathepsin (VCATH) from Lepidoptera (butterflies and moths).